We begin with the raw amino-acid sequence, 381 residues long: Succinyl-diaminopimelate desuccinylase (381 aa).

His71 provides a ligand contact to Zn(2+). Asp73 is a catalytic residue. Asp104 is a Zn(2+) binding site. Residue Glu138 is the Proton acceptor of the active site. Zn(2+) contacts are provided by Glu139, Glu167, and His353.

Belongs to the peptidase M20A family. DapE subfamily. In terms of assembly, homodimer. Zn(2+) serves as cofactor. It depends on Co(2+) as a cofactor.

It catalyses the reaction N-succinyl-(2S,6S)-2,6-diaminopimelate + H2O = (2S,6S)-2,6-diaminopimelate + succinate. It participates in amino-acid biosynthesis; L-lysine biosynthesis via DAP pathway; LL-2,6-diaminopimelate from (S)-tetrahydrodipicolinate (succinylase route): step 3/3. Functionally, catalyzes the hydrolysis of N-succinyl-L,L-diaminopimelic acid (SDAP), forming succinate and LL-2,6-diaminopimelate (DAP), an intermediate involved in the bacterial biosynthesis of lysine and meso-diaminopimelic acid, an essential component of bacterial cell walls. This is Succinyl-diaminopimelate desuccinylase from Shewanella piezotolerans (strain WP3 / JCM 13877).